Consider the following 95-residue polypeptide: Protein TusB (95 aa).

The protein belongs to the DsrH/TusB family. As to quaternary structure, heterohexamer, formed by a dimer of trimers. The hexameric TusBCD complex contains 2 copies each of TusB, TusC and TusD. The TusBCD complex interacts with TusE.

Its subcellular location is the cytoplasm. In terms of biological role, part of a sulfur-relay system required for 2-thiolation of 5-methylaminomethyl-2-thiouridine (mnm(5)s(2)U) at tRNA wobble positions. This Enterobacter sp. (strain 638) protein is Protein TusB.